Consider the following 343-residue polypeptide: Anthranilate phosphoribosyltransferase (343 aa).

5-phospho-alpha-D-ribose 1-diphosphate-binding positions include Gly84, 87–88 (GD), Thr92, 94–97 (NIST), 112–120 (KHGNRSASS), and Ser124. Gly84 contacts anthranilate. Ser96 is a binding site for Mg(2+). Asn115 provides a ligand contact to anthranilate. Position 170 (Arg170) interacts with anthranilate. Residues Asp229 and Glu230 each coordinate Mg(2+).

It belongs to the anthranilate phosphoribosyltransferase family. In terms of assembly, homodimer. Requires Mg(2+) as cofactor.

It catalyses the reaction N-(5-phospho-beta-D-ribosyl)anthranilate + diphosphate = 5-phospho-alpha-D-ribose 1-diphosphate + anthranilate. It functions in the pathway amino-acid biosynthesis; L-tryptophan biosynthesis; L-tryptophan from chorismate: step 2/5. Catalyzes the transfer of the phosphoribosyl group of 5-phosphorylribose-1-pyrophosphate (PRPP) to anthranilate to yield N-(5'-phosphoribosyl)-anthranilate (PRA). This Bordetella avium (strain 197N) protein is Anthranilate phosphoribosyltransferase.